Consider the following 77-residue polypeptide: U8-lycotoxin-Ls1t (77 aa).

Positions 1 to 20 (MKLIIFTGLVPFAIVSLIEA) are cleaved as a signal peptide. Positions 21 to 26 (QAENEK) are excised as a propeptide.

Belongs to the neurotoxin 19 (CSTX) family. 08 (U8-Lctx) subfamily. Contains 4 disulfide bonds. Expressed by the venom gland.

The protein resides in the secreted. The sequence is that of U8-lycotoxin-Ls1t from Lycosa singoriensis (Wolf spider).